The sequence spans 157 residues: Cyclic pyranopterin monophosphate synthase (157 aa).

Residues 74–76 (MCH) and 112–113 (ME) contribute to the substrate site. Residue Asp127 is part of the active site.

It belongs to the MoaC family. Homohexamer; trimer of dimers.

The catalysed reaction is (8S)-3',8-cyclo-7,8-dihydroguanosine 5'-triphosphate = cyclic pyranopterin phosphate + diphosphate. Its pathway is cofactor biosynthesis; molybdopterin biosynthesis. Its function is as follows. Catalyzes the conversion of (8S)-3',8-cyclo-7,8-dihydroguanosine 5'-triphosphate to cyclic pyranopterin monophosphate (cPMP). The sequence is that of Cyclic pyranopterin monophosphate synthase from Syntrophomonas wolfei subsp. wolfei (strain DSM 2245B / Goettingen).